The chain runs to 446 residues: ATP-dependent protease ATPase subunit HslU (446 aa).

ATP is bound by residues Val18, 60-65 (GVGKTE), Asp259, Glu324, and Arg396.

This sequence belongs to the ClpX chaperone family. HslU subfamily. A double ring-shaped homohexamer of HslV is capped on each side by a ring-shaped HslU homohexamer. The assembly of the HslU/HslV complex is dependent on binding of ATP.

It localises to the cytoplasm. Functionally, ATPase subunit of a proteasome-like degradation complex; this subunit has chaperone activity. The binding of ATP and its subsequent hydrolysis by HslU are essential for unfolding of protein substrates subsequently hydrolyzed by HslV. HslU recognizes the N-terminal part of its protein substrates and unfolds these before they are guided to HslV for hydrolysis. The polypeptide is ATP-dependent protease ATPase subunit HslU (Dechloromonas aromatica (strain RCB)).